Consider the following 538-residue polypeptide: Mitochondrial distribution and morphology protein 34 (538 aa).

The SMP-LTD domain maps to 1–224 (MSFRFDRSVF…LPTALFNMSQ (224 aa)). Disordered regions lie at residues 26–55 (ALNP…RKSG) and 231–251 (DGSR…NQPS).

Belongs to the MDM34 family. Component of the ER-mitochondria encounter structure (ERMES) or MDM complex, composed of MMM1, MDM10, MDM12 and MDM34.

Its subcellular location is the mitochondrion outer membrane. In terms of biological role, component of the ERMES/MDM complex, which serves as a molecular tether to connect the endoplasmic reticulum (ER) and mitochondria. Components of this complex are involved in the control of mitochondrial shape and protein biogenesis, and function in nonvesicular lipid trafficking between the ER and mitochondria. MDM34 is required for the interaction of the ER-resident membrane protein MMM1 and the outer mitochondrial membrane-resident beta-barrel protein MDM10. The polypeptide is Mitochondrial distribution and morphology protein 34 (Candida glabrata (strain ATCC 2001 / BCRC 20586 / JCM 3761 / NBRC 0622 / NRRL Y-65 / CBS 138) (Yeast)).